The primary structure comprises 125 residues: uncharacterized protein (125 aa).

The interval 1-21 (MLFYHCSSFSSSSSSSSSSAS) is disordered. Residues 7 to 21 (SSFSSSSSSSSSSAS) show a composition bias toward low complexity.

This is an uncharacterized protein from Saccharomyces cerevisiae (strain ATCC 204508 / S288c) (Baker's yeast).